A 120-amino-acid polypeptide reads, in one-letter code: Immunoglobulin lambda variable 4-60 (120 aa).

An N-terminal signal peptide occupies residues 1–21; the sequence is MAWTPLLLLFPLLLHCTGSLS. The interval 22–46 is framework-1; it reads QPVLTQSSSASASLGSSVKLTCTLS. The region spanning 23–120 is the Ig-like domain; it reads PVLTQSSSAS…YYCETWDSNT (98 aa). Residues Cys43 and Cys113 are joined by a disulfide bond. Positions 47–53 are complementarity-determining-1; sequence SGHSSYI. The interval 54–70 is framework-2; it reads IAWHQQQPGKAPRYLMK. Residues 71–77 are complementarity-determining-2; it reads LEGSGSY. The segment at 78 to 113 is framework-3; sequence NKGSGVPDRFSGSSSGADRYLTISNLQFEDEADYYC. The complementarity-determining-3 stretch occupies residues 114–120; sequence ETWDSNT.

In terms of assembly, immunoglobulins are composed of two identical heavy chains and two identical light chains; disulfide-linked.

The protein localises to the secreted. Its subcellular location is the cell membrane. Its function is as follows. V region of the variable domain of immunoglobulin light chains that participates in the antigen recognition. Immunoglobulins, also known as antibodies, are membrane-bound or secreted glycoproteins produced by B lymphocytes. In the recognition phase of humoral immunity, the membrane-bound immunoglobulins serve as receptors which, upon binding of a specific antigen, trigger the clonal expansion and differentiation of B lymphocytes into immunoglobulins-secreting plasma cells. Secreted immunoglobulins mediate the effector phase of humoral immunity, which results in the elimination of bound antigens. The antigen binding site is formed by the variable domain of one heavy chain, together with that of its associated light chain. Thus, each immunoglobulin has two antigen binding sites with remarkable affinity for a particular antigen. The variable domains are assembled by a process called V-(D)-J rearrangement and can then be subjected to somatic hypermutations which, after exposure to antigen and selection, allow affinity maturation for a particular antigen. The protein is Immunoglobulin lambda variable 4-60 of Homo sapiens (Human).